Consider the following 678-residue polypeptide: RxLR effector protein PITG_16705 (678 aa).

An N-terminal signal peptide occupies residues 1 to 20 (MHLFFLTAVAFVITSVSVDA). Residues 46-61 (RLLRKNSTVDLVGEER) carry the RxLR-dEER motif.

This sequence belongs to the RxLR effector family.

The protein localises to the secreted. It is found in the host cytoplasm. Functionally, effector that enhances P.infestans colonization of Nicotiana benthamiana leaves. The sequence is that of RxLR effector protein PITG_16705 from Phytophthora infestans (strain T30-4) (Potato late blight agent).